The chain runs to 309 residues: Isopentenyl-diphosphate Delta-isomerase II (309 aa).

Lys112 is a substrate binding site. Mg(2+) is bound by residues His116 and His128. Residues 126-278 (LLHRAFSVFL…GLKLSPWFRL (153 aa)) enclose the Nudix hydrolase domain. Arg147 and Lys151 together coordinate substrate. Residue Cys163 is part of the active site. Ser164 lines the substrate pocket. 2 residues coordinate Mg(2+): Glu223 and Glu225. The active site involves Glu225.

This sequence belongs to the IPP isomerase type 1 family. The cofactor is Mg(2+).

It carries out the reaction isopentenyl diphosphate = dimethylallyl diphosphate. The protein operates within isoprenoid biosynthesis; dimethylallyl diphosphate biosynthesis; dimethylallyl diphosphate from isopentenyl diphosphate: step 1/1. It functions in the pathway porphyrin-containing compound metabolism; chlorophyll biosynthesis. Catalyzes the 1,3-allylic rearrangement of the homoallylic substrate isopentenyl (IPP) to its highly electrophilic allylic isomer, dimethylallyl diphosphate (DMAPP). This is Isopentenyl-diphosphate Delta-isomerase II (IPI2) from Camptotheca acuminata (Happy tree).